A 156-amino-acid polypeptide reads, in one-letter code: Proline dehydrogenase transcriptional activator (156 aa).

The HTH asnC-type domain maps to 10–71 (LDHFDLKILE…VLNPQKLGVD (62 aa)). Residues 29-48 (VLQLSKRVGLSKTPCQTRLK) constitute a DNA-binding region (H-T-H motif).

In terms of biological role, transcriptional activator of the putA gene in response to proline. This chain is Proline dehydrogenase transcriptional activator (putR), found in Rhizobium radiobacter (Agrobacterium tumefaciens).